Here is a 303-residue protein sequence, read N- to C-terminus: UDP-3-O-acyl-N-acetylglucosamine deacetylase (303 aa).

Zn(2+) contacts are provided by His78, His237, and Asp241. His264 functions as the Proton donor in the catalytic mechanism.

The protein belongs to the LpxC family. The cofactor is Zn(2+).

It catalyses the reaction a UDP-3-O-[(3R)-3-hydroxyacyl]-N-acetyl-alpha-D-glucosamine + H2O = a UDP-3-O-[(3R)-3-hydroxyacyl]-alpha-D-glucosamine + acetate. Its pathway is glycolipid biosynthesis; lipid IV(A) biosynthesis; lipid IV(A) from (3R)-3-hydroxytetradecanoyl-[acyl-carrier-protein] and UDP-N-acetyl-alpha-D-glucosamine: step 2/6. Functionally, catalyzes the hydrolysis of UDP-3-O-myristoyl-N-acetylglucosamine to form UDP-3-O-myristoylglucosamine and acetate, the committed step in lipid A biosynthesis. In Pseudomonas savastanoi pv. phaseolicola (strain 1448A / Race 6) (Pseudomonas syringae pv. phaseolicola (strain 1448A / Race 6)), this protein is UDP-3-O-acyl-N-acetylglucosamine deacetylase.